We begin with the raw amino-acid sequence, 1857 residues long: Fatty acid synthase subunit alpha (1857 aa).

The segment at 96-132 (EEEPEATEPAPSATPAAPAAAPAAGAPPPPPSAGPAA) is disordered. Residues 102-119 (TEPAPSATPAAPAAAPAA) show a composition bias toward low complexity. The Carrier domain occupies 139–214 (VTAVDILRTL…ASMQATFNGQ (76 aa)). O-(pantetheine 4'-phosphoryl)serine is present on Ser-174. The interval 577 to 604 (QIIPQENGHSKKGGRSAAKRNTPTRPGK) is disordered. The segment at 648 to 845 (KNVLMTGAGA…GAVIGWTRGT (198 aa)) is beta-ketoacyl reductase. In terms of domain architecture, Ketosynthase family 3 (KS3) spans 1092 to 1633 (LQEIVIQEDL…QKGAQVIGIH (542 aa)). Residues Cys-1275, His-1518, and His-1559 each act as for beta-ketoacyl synthase activity in the active site. Residues Asp-1743, Val-1744, and Glu-1745 each contribute to the Mg(2+) site. Acetyl-CoA contacts are provided by residues 1743–1745 (DVE), Tyr-1769, Ser-1779, 1788–1798 (EAVFKSLGVSS), 1812–1815 (VDAN), and 1842–1844 (ISH). The Mg(2+) site is built by Ser-1843 and His-1844.

This sequence belongs to the thiolase-like superfamily. Fungal fatty acid synthetase subunit alpha family. In terms of assembly, [Alpha(6)beta(6)] hexamers of two multifunctional subunits (alpha and beta).

It carries out the reaction acetyl-CoA + n malonyl-CoA + 2n NADPH + 4n H(+) = a long-chain-acyl-CoA + n CoA + n CO2 + 2n NADP(+).. The enzyme catalyses a fatty acyl-[ACP] + malonyl-[ACP] + H(+) = a 3-oxoacyl-[ACP] + holo-[ACP] + CO2. The catalysed reaction is a (3R)-hydroxyacyl-[ACP] + NADP(+) = a 3-oxoacyl-[ACP] + NADPH + H(+). Its function is as follows. Fatty acid synthetase catalyzes the formation of long-chain fatty acids from acetyl-CoA, malonyl-CoA and NADPH. The alpha subunit contains domains for: acyl carrier protein, 3-oxoacyl-[acyl-carrier-protein] reductase, and 3-oxoacyl-[acyl-carrier-protein] synthase. In Penicillium patulum (Penicillium griseofulvum), this protein is Fatty acid synthase subunit alpha (FAS2).